The sequence spans 388 residues: Succinate--CoA ligase [ADP-forming] subunit beta (388 aa).

The ATP-grasp domain occupies 9-244 (KQLFAEYGLP…PSQEDEREAH (236 aa)). Residues K46, 53–55 (GRG), E99, T102, and E107 contribute to the ATP site. N199 and D213 together coordinate Mg(2+). Residues N264 and 321–323 (GIV) each bind substrate.

Belongs to the succinate/malate CoA ligase beta subunit family. In terms of assembly, heterotetramer of two alpha and two beta subunits. The cofactor is Mg(2+).

The enzyme catalyses succinate + ATP + CoA = succinyl-CoA + ADP + phosphate. The catalysed reaction is GTP + succinate + CoA = succinyl-CoA + GDP + phosphate. The protein operates within carbohydrate metabolism; tricarboxylic acid cycle; succinate from succinyl-CoA (ligase route): step 1/1. Succinyl-CoA synthetase functions in the citric acid cycle (TCA), coupling the hydrolysis of succinyl-CoA to the synthesis of either ATP or GTP and thus represents the only step of substrate-level phosphorylation in the TCA. The beta subunit provides nucleotide specificity of the enzyme and binds the substrate succinate, while the binding sites for coenzyme A and phosphate are found in the alpha subunit. This Saccharophagus degradans (strain 2-40 / ATCC 43961 / DSM 17024) protein is Succinate--CoA ligase [ADP-forming] subunit beta.